Here is a 354-residue protein sequence, read N- to C-terminus: Anthranilate phosphoribosyltransferase (354 aa).

5-phospho-alpha-D-ribose 1-diphosphate-binding positions include Gly94, Gly97–Asp98, Thr102, Asn104–Thr107, Lys122–Ser130, and Ser134. Gly94 contacts anthranilate. Mg(2+) is bound at residue Ser106. Asn125 is an anthranilate binding site. Arg180 is an anthranilate binding site. The Mg(2+) site is built by Asp238 and Glu239.

The protein belongs to the anthranilate phosphoribosyltransferase family. Homodimer. Mg(2+) serves as cofactor.

The enzyme catalyses N-(5-phospho-beta-D-ribosyl)anthranilate + diphosphate = 5-phospho-alpha-D-ribose 1-diphosphate + anthranilate. It functions in the pathway amino-acid biosynthesis; L-tryptophan biosynthesis; L-tryptophan from chorismate: step 2/5. Functionally, catalyzes the transfer of the phosphoribosyl group of 5-phosphorylribose-1-pyrophosphate (PRPP) to anthranilate to yield N-(5'-phosphoribosyl)-anthranilate (PRA). The protein is Anthranilate phosphoribosyltransferase of Streptomyces griseus subsp. griseus (strain JCM 4626 / CBS 651.72 / NBRC 13350 / KCC S-0626 / ISP 5235).